A 675-amino-acid chain; its full sequence is Methionine--tRNA ligase (675 aa).

Residues 15–25 (PYANGPIHLGH) carry the 'HIGH' region motif. Residues Cys-146, Cys-149, Cys-159, and Cys-162 each coordinate Zn(2+). A 'KMSKS' region motif is present at residues 332-336 (KMSKS). Lys-335 is a binding site for ATP. Positions 574–675 (DFAKIDLRVA…AGAKPGMRVK (102 aa)) constitute a tRNA-binding domain.

Belongs to the class-I aminoacyl-tRNA synthetase family. MetG type 1 subfamily. Homodimer. Requires Zn(2+) as cofactor.

The protein localises to the cytoplasm. It catalyses the reaction tRNA(Met) + L-methionine + ATP = L-methionyl-tRNA(Met) + AMP + diphosphate. Functionally, is required not only for elongation of protein synthesis but also for the initiation of all mRNA translation through initiator tRNA(fMet) aminoacylation. In Shewanella amazonensis (strain ATCC BAA-1098 / SB2B), this protein is Methionine--tRNA ligase.